A 270-amino-acid chain; its full sequence is 3-methyl-2-oxobutanoate hydroxymethyltransferase (270 aa).

Asp41 and Asp80 together coordinate Mg(2+). Residues 41–42, Asp80, and Lys109 each bind 3-methyl-2-oxobutanoate; that span reads DS. Mg(2+) is bound at residue Glu111. Glu178 serves as the catalytic Proton acceptor.

The protein belongs to the PanB family. Homodecamer; pentamer of dimers. It depends on Mg(2+) as a cofactor.

It is found in the cytoplasm. The catalysed reaction is 3-methyl-2-oxobutanoate + (6R)-5,10-methylene-5,6,7,8-tetrahydrofolate + H2O = 2-dehydropantoate + (6S)-5,6,7,8-tetrahydrofolate. It functions in the pathway cofactor biosynthesis; (R)-pantothenate biosynthesis; (R)-pantoate from 3-methyl-2-oxobutanoate: step 1/2. Its function is as follows. Catalyzes the reversible reaction in which hydroxymethyl group from 5,10-methylenetetrahydrofolate is transferred onto alpha-ketoisovalerate to form ketopantoate. This chain is 3-methyl-2-oxobutanoate hydroxymethyltransferase, found in Thermotoga sp. (strain RQ2).